Here is a 349-residue protein sequence, read N- to C-terminus: Farnesyl pyrophosphate synthase (349 aa).

Isopentenyl diphosphate is bound by residues lysine 48, arginine 51, and glutamine 90. Mg(2+) is bound by residues aspartate 97 and aspartate 101. Arginine 106 contacts dimethylallyl diphosphate. Arginine 107 contacts isopentenyl diphosphate. 5 residues coordinate dimethylallyl diphosphate: lysine 194, threonine 195, glutamine 234, lysine 251, and lysine 260.

It belongs to the FPP/GGPP synthase family. Mg(2+) serves as cofactor.

It localises to the cytoplasm. The catalysed reaction is isopentenyl diphosphate + dimethylallyl diphosphate = (2E)-geranyl diphosphate + diphosphate. It catalyses the reaction isopentenyl diphosphate + (2E)-geranyl diphosphate = (2E,6E)-farnesyl diphosphate + diphosphate. It functions in the pathway isoprenoid biosynthesis; farnesyl diphosphate biosynthesis; farnesyl diphosphate from geranyl diphosphate and isopentenyl diphosphate: step 1/1. The protein operates within isoprenoid biosynthesis; geranyl diphosphate biosynthesis; geranyl diphosphate from dimethylallyl diphosphate and isopentenyl diphosphate: step 1/1. Functionally, catalyzes the sequential condensation of isopentenyl pyrophosphate with the allylic pyrophosphates, dimethylallyl pyrophosphate, and then with the resultant geranylpyrophosphate to the ultimate product farnesyl pyrophosphate. In Kluyveromyces lactis (strain ATCC 8585 / CBS 2359 / DSM 70799 / NBRC 1267 / NRRL Y-1140 / WM37) (Yeast), this protein is Farnesyl pyrophosphate synthase (FPS1).